Reading from the N-terminus, the 545-residue chain is CTP synthase (545 aa).

The segment at 1–266 (MATNYIFVTG…DTFVCDRFRL (266 aa)) is amidoligase domain. Position 14 (serine 14) interacts with CTP. Serine 14 lines the UTP pocket. Residues 15-20 (SLGKGI) and aspartate 72 each bind ATP. Aspartate 72 and glutamate 140 together coordinate Mg(2+). Residues 147 to 149 (DIE), 187 to 192 (KTKPTQ), and lysine 223 contribute to the CTP site. UTP-binding positions include 187 to 192 (KTKPTQ) and lysine 223. Residue 239–241 (KDV) participates in ATP binding. Residues 291–542 (TIGMVGKYVE…VKAAKDYQDS (252 aa)) form the Glutamine amidotransferase type-1 domain. Glycine 352 lines the L-glutamine pocket. The active-site Nucleophile; for glutamine hydrolysis is the cysteine 379. Residues 380–383 (LGMQ), glutamate 403, and arginine 470 contribute to the L-glutamine site. Active-site residues include histidine 515 and glutamate 517.

This sequence belongs to the CTP synthase family. In terms of assembly, homotetramer.

The catalysed reaction is UTP + L-glutamine + ATP + H2O = CTP + L-glutamate + ADP + phosphate + 2 H(+). It catalyses the reaction L-glutamine + H2O = L-glutamate + NH4(+). It carries out the reaction UTP + NH4(+) + ATP = CTP + ADP + phosphate + 2 H(+). The protein operates within pyrimidine metabolism; CTP biosynthesis via de novo pathway; CTP from UDP: step 2/2. With respect to regulation, allosterically activated by GTP, when glutamine is the substrate; GTP has no effect on the reaction when ammonia is the substrate. The allosteric effector GTP functions by stabilizing the protein conformation that binds the tetrahedral intermediate(s) formed during glutamine hydrolysis. Inhibited by the product CTP, via allosteric rather than competitive inhibition. Functionally, catalyzes the ATP-dependent amination of UTP to CTP with either L-glutamine or ammonia as the source of nitrogen. Regulates intracellular CTP levels through interactions with the four ribonucleotide triphosphates. In Actinobacillus pleuropneumoniae serotype 7 (strain AP76), this protein is CTP synthase.